The chain runs to 331 residues: FMRFamide-related neuropeptides (331 aa).

An N-terminal signal peptide occupies residues 1-25; the sequence is MRCWSPCSLLVVIAIYCLSSHTSEA. Residues 26–65 constitute a propeptide that is removed on maturation; that stretch reads FDLAQACVESQRLSLLPICDTIFAVQQEGAQQSADDGLRS. Phenylalanine amide is present on residues phenylalanine 71 and phenylalanine 83. Residues 86–94 constitute a propeptide that is removed on maturation; sequence NVPDLPFED. The residue at position 100 (phenylalanine 100) is a Phenylalanine amide. Positions 103–168 are excised as a propeptide; sequence AAPQLDDLLK…YVDDVEDSDV (66 aa). Residues 122–153 form a disordered region; it reads QKSDDTSVRRKRSTDAAPQSNTDSAEQKNDSA. Residues phenylalanine 174 and phenylalanine 181 each carry the phenylalanine amide modification. Residues 184–194 constitute a propeptide that is removed on maturation; it reads NPSDVGSKLTE. The residue at position 200 (phenylalanine 200) is a Phenylalanine amide. Positions 203 to 205 are excised as a propeptide; it reads DPE. Phenylalanine 211 is modified (phenylalanine amide). Residues 214-216 constitute a propeptide that is removed on maturation; sequence SDD. Residue phenylalanine 222 is modified to Phenylalanine amide. Residues 225–236 constitute a propeptide that is removed on maturation; the sequence is NPGDAEDELEED. Phenylalanine 242 is subject to Phenylalanine amide. A propeptide spanning residues 245 to 254 is cleaved from the precursor; sequence GDEEDEEEAE. Residue phenylalanine 260 is modified to Phenylalanine amide. The propeptide occupies 263 to 265; that stretch reads DPE. Phenylalanine 271 carries the post-translational modification Phenylalanine amide. A propeptide spanning residues 274–277 is cleaved from the precursor; that stretch reads NGEE. Phenylalanine amide is present on phenylalanine 283. Positions 286-293 are excised as a propeptide; the sequence is NPEEPEAD. Phenylalanine 299 carries the post-translational modification Phenylalanine amide. A propeptide spanning residues 302-312 is cleaved from the precursor; the sequence is GGEEDDVNTEE. Phenylalanine 318 carries the post-translational modification Phenylalanine amide. Positions 321–331 are excised as a propeptide; sequence SAEKCKGCLEG.

The protein belongs to the FARP (FMRFamide related peptide) family. In terms of tissue distribution, present ubiquitously in the brain and regions of the central nervous system as well as in the periphery and throughout the dermal chromatophore layer (at protein level).

It is found in the secreted. Excitatory neurotransmitters that directly modulate chromatophore function by activating chromatophore expansion at the chromatophore neuromuscular junction. This chain is FMRFamide-related neuropeptides, found in Sepia officinalis (Common cuttlefish).